The following is a 468-amino-acid chain: Cysteine--tRNA ligase (468 aa).

A Zn(2+)-binding site is contributed by C33. Positions 35 to 45 (ATVQGLPHIGH) match the 'HIGH' region motif. Residues C211, H236, and E240 each contribute to the Zn(2+) site. The 'KMSKS' region motif lies at 267–271 (KMSKS). ATP is bound at residue K270.

The protein belongs to the class-I aminoacyl-tRNA synthetase family. Monomer. Requires Zn(2+) as cofactor.

It localises to the cytoplasm. The catalysed reaction is tRNA(Cys) + L-cysteine + ATP = L-cysteinyl-tRNA(Cys) + AMP + diphosphate. This is Cysteine--tRNA ligase from Mycobacterium avium (strain 104).